The primary structure comprises 456 residues: Argininosuccinate lyase (456 aa).

It belongs to the lyase 1 family. Argininosuccinate lyase subfamily.

It localises to the cytoplasm. It catalyses the reaction 2-(N(omega)-L-arginino)succinate = fumarate + L-arginine. The protein operates within amino-acid biosynthesis; L-arginine biosynthesis; L-arginine from L-ornithine and carbamoyl phosphate: step 3/3. The polypeptide is Argininosuccinate lyase (Shewanella amazonensis (strain ATCC BAA-1098 / SB2B)).